The following is a 595-amino-acid chain: Adenine deaminase 3 (595 aa).

The protein belongs to the metallo-dependent hydrolases superfamily. Adenine deaminase family. It depends on Mn(2+) as a cofactor.

It catalyses the reaction adenine + H2O + H(+) = hypoxanthine + NH4(+). This Rhizobium meliloti (strain 1021) (Ensifer meliloti) protein is Adenine deaminase 3.